Consider the following 476-residue polypeptide: Probable G-protein coupled receptor No9 (476 aa).

Topologically, residues 1–36 are extracellular; it reads MEGPPLSPAPADNVTLNVSCGRPATLFDWADHRLIS. Asn13 and Asn17 each carry an N-linked (GlcNAc...) asparagine glycan. Residues 37–60 form a helical membrane-spanning segment; the sequence is LLALAFLNLMVVAGNLLVVMAVFV. The Cytoplasmic segment spans residues 61-69; it reads HSKLRTVTN. The helical transmembrane segment at 70 to 93 threads the bilayer; that stretch reads LFIVSLACADLLVGMLVLPFSATL. Residues 94 to 103 are Extracellular-facing; the sequence is EVLDVWLYGD. The chain crosses the membrane as a helical span at residues 104-127; the sequence is VWCSVWLAVDVWMCTSSILNLCAI. A disulfide bond links Cys106 and Cys192. The Cytoplasmic portion of the chain corresponds to 128–152; it reads SLDRYLAVSQPISYPSLMSTRRAKQ. The helical transmembrane segment at 153 to 172 threads the bilayer; it reads LIAAVWVLSFVICFPPLVGW. At 173 to 200 the chain is on the extracellular side; the sequence is NDRPGTLIGSRGSSACRLTCELTNERGY. A helical membrane pass occupies residues 201-221; it reads VIYSALGSFFLPSTVMLFFYG. The Cytoplasmic portion of the chain corresponds to 222–375; it reads RIYRTAVSTT…FRMETKAAKT (154 aa). The segment covering 266–278 has biased composition (low complexity); sequence AAAGGARAHGQVR. Disordered regions lie at residues 266 to 293 and 317 to 351; these read AAAGGARAHGQVRLTLSEPGARRQNKPS and DSRPGRRVPQPQRPAKKLSSASQSSEDDSRPPRFI. The helical transmembrane segment at 376 to 396 threads the bilayer; that stretch reads VGIIVGLFILCWLPFFVCYLV. The Extracellular portion of the chain corresponds to 397-406; that stretch reads RGFCADCVPP. The helical transmembrane segment at 407–430 threads the bilayer; sequence LLFSVFFWLGYCNSAVNPCVYALC. Residues 431 to 476 are Cytoplasmic-facing; the sequence is SRDFRFAFSSILCKCVCRRGAMERRFRRTLLVGNRSQTEEDCEVAD.

It belongs to the G-protein coupled receptor 1 family.

The protein resides in the cell membrane. Orphan G-protein coupled receptor. The polypeptide is Probable G-protein coupled receptor No9 (Amphibalanus amphitrite (Striped barnacle)).